The following is a 386-amino-acid chain: Succinate--CoA ligase [ADP-forming] subunit beta (386 aa).

An ATP-grasp domain is found at 9–235; that stretch reads KELFAKHDVP…REEEDPLESA (227 aa). ATP is bound by residues lysine 44, 51–53, alanine 93, and glutamate 98; that span reads GRG. Positions 190 and 204 each coordinate Mg(2+). Residues asparagine 255 and 317–319 each bind substrate; that span reads GIT.

The protein belongs to the succinate/malate CoA ligase beta subunit family. Heterotetramer of two alpha and two beta subunits. The cofactor is Mg(2+).

It catalyses the reaction succinate + ATP + CoA = succinyl-CoA + ADP + phosphate. It carries out the reaction GTP + succinate + CoA = succinyl-CoA + GDP + phosphate. It participates in carbohydrate metabolism; tricarboxylic acid cycle; succinate from succinyl-CoA (ligase route): step 1/1. Succinyl-CoA synthetase functions in the citric acid cycle (TCA), coupling the hydrolysis of succinyl-CoA to the synthesis of either ATP or GTP and thus represents the only step of substrate-level phosphorylation in the TCA. The beta subunit provides nucleotide specificity of the enzyme and binds the substrate succinate, while the binding sites for coenzyme A and phosphate are found in the alpha subunit. The protein is Succinate--CoA ligase [ADP-forming] subunit beta of Nocardioides sp. (strain ATCC BAA-499 / JS614).